The chain runs to 252 residues: Pantothenate synthetase (252 aa).

29–36 (MGNLHAGH) is a binding site for ATP. Residue H36 is the Proton donor of the active site. Residue Q60 participates in (R)-pantoate binding. A beta-alanine-binding site is contributed by Q60. 146 to 149 (GEKD) contacts ATP. Residue Q152 participates in (R)-pantoate binding. ATP contacts are provided by residues V175 and 183 to 186 (CSSR).

It belongs to the pantothenate synthetase family. Homodimer.

It localises to the cytoplasm. The enzyme catalyses (R)-pantoate + beta-alanine + ATP = (R)-pantothenate + AMP + diphosphate + H(+). The protein operates within cofactor biosynthesis; (R)-pantothenate biosynthesis; (R)-pantothenate from (R)-pantoate and beta-alanine: step 1/1. In terms of biological role, catalyzes the condensation of pantoate with beta-alanine in an ATP-dependent reaction via a pantoyl-adenylate intermediate. This is Pantothenate synthetase from Legionella pneumophila (strain Corby).